Reading from the N-terminus, the 147-residue chain is Large ribosomal subunit protein bL9 (147 aa).

The protein belongs to the bacterial ribosomal protein bL9 family.

Functionally, binds to the 23S rRNA. The protein is Large ribosomal subunit protein bL9 of Exiguobacterium sp. (strain ATCC BAA-1283 / AT1b).